The primary structure comprises 481 residues: Alginate biosynthesis protein AlgA (481 aa).

This sequence belongs to the mannose-6-phosphate isomerase type 2 family. In terms of assembly, monomer. Co(2+) is required as a cofactor.

It catalyses the reaction D-mannose 6-phosphate = D-fructose 6-phosphate. The enzyme catalyses alpha-D-mannose 1-phosphate + GTP + H(+) = GDP-alpha-D-mannose + diphosphate. It functions in the pathway nucleotide-sugar biosynthesis; GDP-alpha-D-mannose biosynthesis; GDP-alpha-D-mannose from alpha-D-mannose 1-phosphate (GTP route): step 1/1. The protein operates within nucleotide-sugar biosynthesis; GDP-alpha-D-mannose biosynthesis; alpha-D-mannose 1-phosphate from D-fructose 6-phosphate: step 1/2. In terms of biological role, produces a precursor for alginate polymerization. The alginate layer provides a protective barrier against host immune defenses and antibiotics. This is Alginate biosynthesis protein AlgA (algA) from Pseudomonas aeruginosa (strain ATCC 15692 / DSM 22644 / CIP 104116 / JCM 14847 / LMG 12228 / 1C / PRS 101 / PAO1).